The primary structure comprises 369 residues: Coiled-coil domain-containing protein 149 (369 aa).

Positions 1–249 form a coiled coil; that stretch reads MKENNNAEIL…AKYKQMAEAV (249 aa).

It belongs to the CCDC149 family. Expressed in amphid and phasmid ciliated neurons, and also pharyngeal, touch receptor and motor neurons.

The protein localises to the cell projection. It localises to the cilium. This chain is Coiled-coil domain-containing protein 149, found in Caenorhabditis elegans.